The following is a 393-amino-acid chain: Protein TsgA (393 aa).

Helical transmembrane passes span 11–31 (WISF…GMVM), 51–71 (FLNA…EIIP), 78–98 (FGFI…SLAL), 101–121 (AAMF…TFLI), 134–154 (LLFT…VAAF), 162–182 (WYWV…LTFG), 206–226 (IGVL…LGFI), 245–265 (ALVS…SFIL), 273–293 (ILTV…TGTQ), 298–318 (WFIL…ITLG), 332–352 (FILT…GPIV), and 361–381 (LLTA…LGFV).

This sequence belongs to the major facilitator superfamily. TsgA family.

It is found in the cell inner membrane. This Salmonella schwarzengrund (strain CVM19633) protein is Protein TsgA.